The following is a 254-amino-acid chain: uncharacterized protein (254 aa).

The active-site Acyl-thioester intermediate is the Cys71. Residues His110 and Asp125 contribute to the active site.

It belongs to the arylamine N-acetyltransferase family.

This is an uncharacterized protein from Bacillus subtilis (strain 168).